A 74-amino-acid polypeptide reads, in one-letter code: MFCEPKNLVVLRQLSRQASVKVGKTWTGTKKRAQRIFIFILELLLEFCRGEDSVDGKNKSTTALPAVKDSVKDS.

Over 1–35 (MFCEPKNLVVLRQLSRQASVKVGKTWTGTKKRAQR) the chain is Cytoplasmic. A phosphoserine; by host mark is found at Ser-15 and Ser-19. Phosphothreonine; by host is present on Thr-29. The helical; Signal-anchor for type II membrane protein transmembrane segment at 36–52 (IFIFILELLLEFCRGED) threads the bilayer. Residues 53–74 (SVDGKNKSTTALPAVKDSVKDS) are Extracellular-facing.

It belongs to the polyomavirus agnoprotein family. In terms of assembly, homooligomer. Interacts with VP1. Interacts with large T antigen; this interaction may impact upon the activity of T-antigen on the control of viral gene transcription and replication. Interacts with small t antigen. Interacts with host CBX5; this interaction induces the dissociation of CBX5 from LBR, resulting in destabilization of the nuclear envelope. In terms of processing, phosphorylated by host kinase. Phosphorylation segregates agnoprotein in cytoplasm, whereas unphosphorylated agnoprotein migrate to the nucleus.

Its subcellular location is the host cytoplasm. The protein localises to the host nucleus membrane. It localises to the host rough endoplasmic reticulum membrane. The protein resides in the host cell membrane. Functionally, alters the structure of the nuclear envelope by interacting with host CBX5 and disrupting CBX5 association with LBR. Involved in the perinuclear-nuclear localization of the capsid protein VP1 during virion assembly and maturation. Plays an important role in the release of progeny virions from infected cells and in viral propagation, probably by acting as a viral ionic channel in the host plasma membrane. Allows influx of extracellular calcium ions in the host cell. May contribute to viral genome transcription and translation of viral late proteins. This Homo sapiens (Human) protein is Agnoprotein.